The primary structure comprises 393 residues: Phosphopentomutase (393 aa).

6 residues coordinate Mn(2+): aspartate 11, aspartate 282, histidine 287, aspartate 323, histidine 324, and histidine 335.

The protein belongs to the phosphopentomutase family. It depends on Mn(2+) as a cofactor.

It is found in the cytoplasm. It carries out the reaction 2-deoxy-alpha-D-ribose 1-phosphate = 2-deoxy-D-ribose 5-phosphate. The catalysed reaction is alpha-D-ribose 1-phosphate = D-ribose 5-phosphate. It functions in the pathway carbohydrate degradation; 2-deoxy-D-ribose 1-phosphate degradation; D-glyceraldehyde 3-phosphate and acetaldehyde from 2-deoxy-alpha-D-ribose 1-phosphate: step 1/2. In terms of biological role, isomerase that catalyzes the conversion of deoxy-ribose 1-phosphate (dRib-1-P) and ribose 1-phosphate (Rib-1-P) to deoxy-ribose 5-phosphate (dRib-5-P) and ribose 5-phosphate (Rib-5-P), respectively. This is Phosphopentomutase from Caldanaerobacter subterraneus subsp. tengcongensis (strain DSM 15242 / JCM 11007 / NBRC 100824 / MB4) (Thermoanaerobacter tengcongensis).